We begin with the raw amino-acid sequence, 339 residues long: Holliday junction branch migration complex subunit RuvB (339 aa).

Residues 2–187 (KDVNDEERII…FGIIEHMQYY (186 aa)) form a large ATPase domain (RuvB-L) region. ATP contacts are provided by residues Leu-26, Arg-27, Gly-68, Lys-71, Thr-72, Thr-73, 134–136 (EDF), Arg-177, Tyr-187, and Arg-224. Residue Thr-72 participates in Mg(2+) binding. Positions 188–258 (SIDDLEKIIQ…TTKHSLHLLE (71 aa)) are small ATPAse domain (RuvB-S). Positions 261–339 (DEGLDQTDRK…QLGYPPKKAE (79 aa)) are head domain (RuvB-H). 2 residues coordinate DNA: Arg-316 and Arg-321.

This sequence belongs to the RuvB family. In terms of assembly, homohexamer. Forms an RuvA(8)-RuvB(12)-Holliday junction (HJ) complex. HJ DNA is sandwiched between 2 RuvA tetramers; dsDNA enters through RuvA and exits via RuvB. An RuvB hexamer assembles on each DNA strand where it exits the tetramer. Each RuvB hexamer is contacted by two RuvA subunits (via domain III) on 2 adjacent RuvB subunits; this complex drives branch migration. In the full resolvosome a probable DNA-RuvA(4)-RuvB(12)-RuvC(2) complex forms which resolves the HJ.

The protein localises to the cytoplasm. The catalysed reaction is ATP + H2O = ADP + phosphate + H(+). Functionally, the RuvA-RuvB-RuvC complex processes Holliday junction (HJ) DNA during genetic recombination and DNA repair, while the RuvA-RuvB complex plays an important role in the rescue of blocked DNA replication forks via replication fork reversal (RFR). RuvA specifically binds to HJ cruciform DNA, conferring on it an open structure. The RuvB hexamer acts as an ATP-dependent pump, pulling dsDNA into and through the RuvAB complex. RuvB forms 2 homohexamers on either side of HJ DNA bound by 1 or 2 RuvA tetramers; 4 subunits per hexamer contact DNA at a time. Coordinated motions by a converter formed by DNA-disengaged RuvB subunits stimulates ATP hydrolysis and nucleotide exchange. Immobilization of the converter enables RuvB to convert the ATP-contained energy into a lever motion, pulling 2 nucleotides of DNA out of the RuvA tetramer per ATP hydrolyzed, thus driving DNA branch migration. The RuvB motors rotate together with the DNA substrate, which together with the progressing nucleotide cycle form the mechanistic basis for DNA recombination by continuous HJ branch migration. Branch migration allows RuvC to scan DNA until it finds its consensus sequence, where it cleaves and resolves cruciform DNA. The sequence is that of Holliday junction branch migration complex subunit RuvB from Lactobacillus gasseri (strain ATCC 33323 / DSM 20243 / BCRC 14619 / CIP 102991 / JCM 1131 / KCTC 3163 / NCIMB 11718 / NCTC 13722 / AM63).